Reading from the N-terminus, the 582-residue chain is ATP-dependent lipid A-core flippase (582 aa).

5 consecutive transmembrane segments (helical) span residues 16 to 36, 63 to 83, 153 to 173, 253 to 273, and 275 to 295; these read LWPMISPFKAGLAVAAIALII, VLLWMPLVVIGLMLVRGASGF, IIGLFILMFYYSWQLSIILIV, PIIQLIASLALAFVLYAASFP, and VMETLTAGTITVVFSSMIALM. One can recognise an ABC transmembrane type-1 domain in the interval 28 to 310; it reads AVAAIALIIN…LTNVNAQFQR (283 aa). Residues 342 to 578 form the ABC transporter domain; sequence LEFRQVNFAY…NGAYAQLHRM (237 aa). 376 to 383 is a binding site for ATP; the sequence is GRSGSGKS.

This sequence belongs to the ABC transporter superfamily. Lipid exporter (TC 3.A.1.106) family. As to quaternary structure, homodimer.

It is found in the cell inner membrane. It carries out the reaction ATP + H2O + lipid A-core oligosaccharideSide 1 = ADP + phosphate + lipid A-core oligosaccharideSide 2.. Functionally, involved in lipopolysaccharide (LPS) biosynthesis. Translocates lipid A-core from the inner to the outer leaflet of the inner membrane. Transmembrane domains (TMD) form a pore in the inner membrane and the ATP-binding domain (NBD) is responsible for energy generation. This chain is ATP-dependent lipid A-core flippase, found in Pectobacterium atrosepticum (strain SCRI 1043 / ATCC BAA-672) (Erwinia carotovora subsp. atroseptica).